Reading from the N-terminus, the 342-residue chain is Immune-associated nucleotide-binding protein 9 (342 aa).

Positions 22-229 constitute an AIG1-type G domain; sequence NPKRTLVLVG…YSDELFHELQ (208 aa). Residues 31-38 are G1; it reads GRTGNGKS. GTP-binding positions include 31–39 and Ser52; that span reads GRTGNGKSA. Residues 58 to 62 form a G2 region; sequence GVTST. The interval 80–83 is G3; the sequence is DTPG. The tract at residues 149–152 is G4; that stretch reads TGGD. The segment at 188-190 is G5; the sequence is NNK. Asn189 contacts GTP. A coiled-coil region spans residues 276-342; the sequence is ETKLRDTAKR…QKKLGKCINL (67 aa).

Belongs to the TRAFAC class TrmE-Era-EngA-EngB-Septin-like GTPase superfamily. AIG1/Toc34/Toc159-like paraseptin GTPase family. IAN subfamily. In terms of tissue distribution, mainly expressed in leaves.

In Arabidopsis thaliana (Mouse-ear cress), this protein is Immune-associated nucleotide-binding protein 9.